The following is a 247-amino-acid chain: E3 SUMO-protein ligase NSE2 (247 aa).

Methionine 1 bears the N-acetylmethionine mark. Glycyl lysine isopeptide (Lys-Gly) (interchain with G-Cter in SUMO2) cross-links involve residues lysine 90 and lysine 107. A Phosphoserine modification is found at serine 116. Residues lysine 125 and lysine 130 each participate in a glycyl lysine isopeptide (Lys-Gly) (interchain with G-Cter in SUMO2) cross-link. Residues 154–240 (VDEDIIVTQS…LRRAIENHNK (87 aa)) form an SP-RING-type zinc finger. Residues cysteine 185, histidine 187, cysteine 210, and cysteine 215 each coordinate Zn(2+).

This sequence belongs to the NSE2 family. In terms of assembly, component of the SMC5-SMC6 complex which consists at least of SMC5, SMC6, NSMCE2, NSMCE1, NSMCE4A or EID3 and NSMCE3. Post-translationally, sumoylated, possibly via autosumoylation.

Its subcellular location is the nucleus. The protein localises to the chromosome. It is found in the telomere. It localises to the PML body. Its pathway is protein modification; protein sumoylation. E3 SUMO-protein ligase component of the SMC5-SMC6 complex, a complex involved in DNA double-strand break repair by homologous recombination. Is not be required for the stability of the complex. The complex may promote sister chromatid homologous recombination by recruiting the SMC1-SMC3 cohesin complex to double-strand breaks. The complex is required for telomere maintenance via recombination in ALT (alternative lengthening of telomeres) cell lines and mediates sumoylation of shelterin complex (telosome) components which is proposed to lead to shelterin complex disassembly in ALT-associated PML bodies (APBs). Acts as an E3 ligase mediating SUMO attachment to various proteins such as SMC6L1 and TSNAX, the shelterin complex subunits TERF1, TERF2, TINF2 and TERF2IP, RAD51AP1, and maybe the cohesin components RAD21 and STAG2. Required for recruitment of telomeres to PML nuclear bodies. SUMO protein-ligase activity is required for the prevention of DNA damage-induced apoptosis by facilitating DNA repair, and for formation of APBs in ALT cell lines. Required for sister chromatid cohesion during prometaphase and mitotic progression. In Homo sapiens (Human), this protein is E3 SUMO-protein ligase NSE2 (NSMCE2).